Consider the following 241-residue polypeptide: 1-(5-phosphoribosyl)-5-[(5-phosphoribosylamino)methylideneamino] imidazole-4-carboxamide isomerase (241 aa).

The Proton acceptor role is filled by Asp-10. The active-site Proton donor is Asp-131.

It belongs to the HisA/HisF family.

The protein resides in the cytoplasm. The catalysed reaction is 1-(5-phospho-beta-D-ribosyl)-5-[(5-phospho-beta-D-ribosylamino)methylideneamino]imidazole-4-carboxamide = 5-[(5-phospho-1-deoxy-D-ribulos-1-ylimino)methylamino]-1-(5-phospho-beta-D-ribosyl)imidazole-4-carboxamide. It functions in the pathway amino-acid biosynthesis; L-histidine biosynthesis; L-histidine from 5-phospho-alpha-D-ribose 1-diphosphate: step 4/9. The sequence is that of 1-(5-phosphoribosyl)-5-[(5-phosphoribosylamino)methylideneamino] imidazole-4-carboxamide isomerase from Bifidobacterium adolescentis (strain ATCC 15703 / DSM 20083 / NCTC 11814 / E194a).